We begin with the raw amino-acid sequence, 787 residues long: MNQKTLKALEYDKIVEILKNMAKSTPAKEYFENLIPSTNLADIENELNKVDEGYRYVLKYGNPPTLEFENILPSLKKSKLGATLNPHEILQIGKVLKLSYEMRSYLSYTQDFSFLESMKKRLVNLKEVISRIDQTFLTADEILDTASPRLKEIRDRIRKLESRIRDELNSMIRDPKIQRFLQEPIITIRGEKLLLPVKAEFRNEVKGIVHDQSATGATLFVEPFVCVEISNQIRILKSQEKEEIERILQEISSLIASYCDEIETSFYALVELDIVFTKAIWAKEMNASKPVINTSGIINLKKARHPLIQKDKVVPIDIHLGKDFDVLIITGPNTGGKTVTLKTVGLFCLLCQSGIFIPADEDSQLCIFQKIFADIGDDQSIVQSLSTFSAHMKNIIEITKNADDKTLVLLDEIGAGTDPEEGAALAKAILKYLSEKGSKVIATTHYGELKIFAQQEDRFENASCEFDVKTLKPTYRLLIGIPGRSNALVISSNLGLDKGIVEMARGYLSQKTIDLDRIINEMEQKRKEAEENLELARKLKLEAQALKAAYEEEKKRFETERERIRKKAINEAKEIVERAQYEIENLFKDLRKLAENLKEKEVLKELEEKKREYERLIQSISQQEKQEAESKTKKTLQNIRLGQKVYVRSFDAVGFVESLPDSKGNLTVQIGIMKLNVNISDIEEVEEGEKKVYQTTSKNVKLREKSVDLSIDVRGKTSDDAILDVDKYLDDAYTSGLRQVTIIHGKGTGVLRQAIRNFLKRHPLVKSFRDGTYGEGEQGVTIVELRD.

Glycine 331–threonine 338 is an ATP binding site. The 76-residue stretch at isoleucine 711–arginine 786 folds into the Smr domain.

The protein belongs to the DNA mismatch repair MutS family. MutS2 subfamily. In terms of assembly, homodimer. Binds to stalled ribosomes, contacting rRNA.

Functionally, endonuclease that is involved in the suppression of homologous recombination and thus may have a key role in the control of bacterial genetic diversity. Acts as a ribosome collision sensor, splitting the ribosome into its 2 subunits. Detects stalled/collided 70S ribosomes which it binds and splits by an ATP-hydrolysis driven conformational change. Acts upstream of the ribosome quality control system (RQC), a ribosome-associated complex that mediates the extraction of incompletely synthesized nascent chains from stalled ribosomes and their subsequent degradation. Probably generates substrates for RQC. This chain is Endonuclease MutS2, found in Caldicellulosiruptor saccharolyticus (strain ATCC 43494 / DSM 8903 / Tp8T 6331).